We begin with the raw amino-acid sequence, 127 residues long: Large ribosomal subunit protein bL20 (127 aa).

It belongs to the bacterial ribosomal protein bL20 family.

Functionally, binds directly to 23S ribosomal RNA and is necessary for the in vitro assembly process of the 50S ribosomal subunit. It is not involved in the protein synthesizing functions of that subunit. The polypeptide is Large ribosomal subunit protein bL20 (rplT) (Mycoplasma pneumoniae (strain ATCC 29342 / M129 / Subtype 1) (Mycoplasmoides pneumoniae)).